Reading from the N-terminus, the 279-residue chain is Urease accessory protein UreD (279 aa).

The protein belongs to the UreD family. UreD, UreF and UreG form a complex that acts as a GTP-hydrolysis-dependent molecular chaperone, activating the urease apoprotein by helping to assemble the nickel containing metallocenter of UreC. The UreE protein probably delivers the nickel.

It localises to the cytoplasm. Its function is as follows. Required for maturation of urease via the functional incorporation of the urease nickel metallocenter. The polypeptide is Urease accessory protein UreD (Streptococcus thermophilus (strain CNRZ 1066)).